A 1616-amino-acid polypeptide reads, in one-letter code: Replicase large subunit (1616 aa).

Residues 50-458 (FSKVVSEEQT…QSLSMTFFLH (409 aa)) are methyltransferase. The region spanning 72–281 (TFYNTQNAVH…HSYSNILKYV (210 aa)) is the Alphavirus-like MT domain. In terms of domain architecture, (+)RNA virus helicase ATP-binding spans 801–963 (VVYSDMAKLR…KLEVDEVETR (163 aa)). Residues 830–1085 (LVDGVPGCGK…RHTKSLKYYT (256 aa)) are helicase. 833–840 (GVPGCGKT) contacts ATP. The region spanning 964-1116 (RTTLRCPADV…DMYKVDAGTQ (153 aa)) is the (+)RNA virus helicase C-terminal domain. One can recognise a RdRp catalytic domain in the interval 1380 to 1493 (MDVLELDVSK…YFPKGCEYPD (114 aa)).

Belongs to the ssRNA positive-strand viruses RNA-directed RNA polymerase family. Heterodimer of a large and a small subunit.

It catalyses the reaction RNA(n) + a ribonucleoside 5'-triphosphate = RNA(n+1) + diphosphate. It carries out the reaction ATP + H2O = ADP + phosphate + H(+). Functionally, is an RNA-dependent RNA polymerase active in viral RNA replication. Its function is as follows. Is a methyltransferase active in RNA capping and an RNA helicase. Methyltransferase displays a cytoplasmic capping enzyme activity. This function is necessary since all viral RNAs are synthesized in the cytoplasm, and host capping enzymes are restricted to the nucleus. Helicase region probably exhibits NTPase and RNA unwinding activities (Potential). It also acts as a suppressor of RNA-mediated gene silencing, also known as post-transcriptional gene silencing (PTGS), a mechanism of plant viral defense that limits the accumulation of viral RNAs. May mediate silencing suppression through either inhibition of HEN1-mediated siRNA or siRNA demethylation. This chain is Replicase large subunit, found in Antirrhinum majus (Garden snapdragon).